The sequence spans 874 residues: Alanine--tRNA ligase (874 aa).

Zn(2+) contacts are provided by H564, H568, C665, and H669.

Belongs to the class-II aminoacyl-tRNA synthetase family. Requires Zn(2+) as cofactor.

Its subcellular location is the cytoplasm. The catalysed reaction is tRNA(Ala) + L-alanine + ATP = L-alanyl-tRNA(Ala) + AMP + diphosphate. Its function is as follows. Catalyzes the attachment of alanine to tRNA(Ala) in a two-step reaction: alanine is first activated by ATP to form Ala-AMP and then transferred to the acceptor end of tRNA(Ala). Also edits incorrectly charged Ser-tRNA(Ala) and Gly-tRNA(Ala) via its editing domain. This Acidovorax sp. (strain JS42) protein is Alanine--tRNA ligase.